Consider the following 178-residue polypeptide: ATP synthase subunit delta (178 aa).

It belongs to the ATPase delta chain family. As to quaternary structure, F-type ATPases have 2 components, F(1) - the catalytic core - and F(0) - the membrane proton channel. F(1) has five subunits: alpha(3), beta(3), gamma(1), delta(1), epsilon(1). F(0) has three main subunits: a(1), b(2) and c(10-14). The alpha and beta chains form an alternating ring which encloses part of the gamma chain. F(1) is attached to F(0) by a central stalk formed by the gamma and epsilon chains, while a peripheral stalk is formed by the delta and b chains.

It localises to the cell membrane. Functionally, f(1)F(0) ATP synthase produces ATP from ADP in the presence of a proton or sodium gradient. F-type ATPases consist of two structural domains, F(1) containing the extramembraneous catalytic core and F(0) containing the membrane proton channel, linked together by a central stalk and a peripheral stalk. During catalysis, ATP synthesis in the catalytic domain of F(1) is coupled via a rotary mechanism of the central stalk subunits to proton translocation. Its function is as follows. This protein is part of the stalk that links CF(0) to CF(1). It either transmits conformational changes from CF(0) to CF(1) or is implicated in proton conduction. This chain is ATP synthase subunit delta, found in Streptococcus gordonii (strain Challis / ATCC 35105 / BCRC 15272 / CH1 / DL1 / V288).